The primary structure comprises 667 residues: Probable sulfate permease C320.05 (667 aa).

The tract at residues 1–27 (MSSPSENHLLGPKTSFIDNRTSTSRPL) is disordered. The segment covering 16-25 (FIDNRTSTSR) has biased composition (polar residues). Helical transmembrane passes span 77–97 (IIWD…IALS), 102–122 (FLGV…ILYC), 162–182 (ILVT…AGLF), 198–218 (GCIL…FFGF), 240–260 (MSKA…LLIG), 275–295 (IVSI…SKKF), 301–321 (YGIA…LPLP), 336–356 (GVMC…AISL), 368–388 (LISL…PICG), 405–425 (VATI…MPVF), 433–453 (LASM…VEIF), and 465–485 (GIIF…GIIF). In terms of domain architecture, STAS spans 532–657 (SSTAVESAPR…DHVQDSIKKV (126 aa)).

Belongs to the SLC26A/SulP transporter (TC 2.A.53) family.

Its subcellular location is the endoplasmic reticulum membrane. Functionally, possible sulfate transporter. The chain is Probable sulfate permease C320.05 from Schizosaccharomyces pombe (strain 972 / ATCC 24843) (Fission yeast).